The following is a 165-amino-acid chain: Thiol peroxidase (165 aa).

The region spanning 18-164 (RKVGDKAPNF…YEAAIEAAKK (147 aa)) is the Thioredoxin domain. Residue Cys-60 is the Cysteine sulfenic acid (-SOH) intermediate of the active site. A disulfide bridge links Cys-60 with Cys-94.

The protein belongs to the peroxiredoxin family. Tpx subfamily. In terms of assembly, homodimer.

It catalyses the reaction a hydroperoxide + [thioredoxin]-dithiol = an alcohol + [thioredoxin]-disulfide + H2O. In terms of biological role, thiol-specific peroxidase that catalyzes the reduction of hydrogen peroxide and organic hydroperoxides to water and alcohols, respectively. Plays a role in cell protection against oxidative stress by detoxifying peroxides. The protein is Thiol peroxidase of Listeria monocytogenes serotype 4b (strain F2365).